Here is a 720-residue protein sequence, read N- to C-terminus: Collectin-12 (720 aa).

Over 1–37 (MKDDFNDEEEVQSFGYKRFGIQEGNECTKCKNDWALR) the chain is Cytoplasmic. Residues 38–58 (VAIALLYVLCALLTIAVAVLG) traverse the membrane as a helical; Signal-anchor for type II membrane protein segment. The Extracellular portion of the chain corresponds to 59–720 (YKVVQRMDNV…RTNESKVPVL (662 aa)). Coiled coils occupy residues 95–120 (EKSENATSELHSFKLEFQTLQKQLSD), 216–267 (ISSL…LAAN), and 377–408 (LHGLNNSVAETRAESTELKAQQEELAVRLDKE). Residues 433-576 (FTILQGPPGP…GPPGLPGLPA (144 aa)) are disordered. Collagen-like domains lie at 444–503 (GPRG…PGPK) and 510–569 (GRQG…PGPP). Basic and acidic residues predominate over residues 460-479 (PKGEKGEKGAPGDAGPKGEK). Residues 488–503 (PGLKGPPGSRGSPGPK) are compositionally biased toward low complexity. Residues 504-513 (GSRGSGGRQG) show a composition bias toward gly residues. Low complexity predominate over residues 527 to 560 (PGRDGQPGPTGPQGPQGLRGPAGPAGLEGARGPV). Residues 562 to 576 (PIGPPGPPGLPGLPA) are compositionally biased toward pro residues. 3 disulfides stabilise this stretch: C604–C615, C634–C709, and C687–C701. One can recognise a C-type lectin domain in the interval 611-710 (FREQCYHFSA…CTERIGFICE (100 aa)). Residues I643, N645, and E649 each coordinate Ca(2+). Residues K670, Q673, and D675 each coordinate a carbohydrate. Residues Q673, D675, N676, E685, D686, N697, D698, and E710 each coordinate Ca(2+). Position 685 (E685) interacts with a carbohydrate. Residues N697 and D698 each coordinate a carbohydrate.

It is found in the membrane. In terms of biological role, scavenger receptor that displays several functions associated with host defense. Binds to carbohydrates. The sequence is that of Collectin-12 (colec12) from Danio rerio (Zebrafish).